Here is a 326-residue protein sequence, read N- to C-terminus: F-box/LRR-repeat protein 12 (326 aa).

The 47-residue stretch at 1–47 (MATLFDLPDLVLLEIFSYLPVRDRIRISRVCHRWKRLVDDRWLWRHV) folds into the F-box domain. 8 LRR repeats span residues 51–78 (LYTMRPKVMWHLLRRYMASRLYSLRMGG), 86–111 (APQLSPALMRALGQKCPNLKRLCLHV), 113–133 (DLSMVPITSLPSTLRTLELHS), 161–185 (VPAFRDEHLQGLTRFRALRSLVLGG), 186–211 (TYRVTETGLDASLQELSYLQRLEVLG), 212–236 (CTLSADSTLLAISRHLRDVRKIRLT), 237–261 (VGGLSAQGLVFLEGMPVLESLCFQG), and 266–291 (PDMPTPTQIVSSCLTMPKLRVLEVQG).

In terms of assembly, interacts with SKP1 and CUL1.

The protein operates within protein modification; protein ubiquitination. Its function is as follows. Substrate-recognition component of the SCF (SKP1-CUL1-F-box protein)-type E3 ubiquitin ligase complex. Mediates the polyubiquitination and proteasomal degradation of CAMK1 leading to disruption of cyclin D1/CDK4 complex assembly which results in G1 cell cycle arrest in lung epithelia. The sequence is that of F-box/LRR-repeat protein 12 (Fbxl12) from Mus musculus (Mouse).